We begin with the raw amino-acid sequence, 149 residues long: uncharacterized protein (149 aa).

Disordered regions lie at residues 24 to 74 (TSQG…NDLE) and 129 to 149 (AIQD…PRAP). A compositionally biased stretch (basic and acidic residues) spans 28–42 (EDVKPEPKPEVDEKV). A coiled-coil region spans residues 102–131 (SELESLKEKVSSATSMEELREIMEEFRAIQ).

This is an uncharacterized protein from Archaeoglobus fulgidus (strain ATCC 49558 / DSM 4304 / JCM 9628 / NBRC 100126 / VC-16).